We begin with the raw amino-acid sequence, 393 residues long: Formate-dependent phosphoribosylglycinamide formyltransferase (393 aa).

N(1)-(5-phospho-beta-D-ribosyl)glycinamide is bound by residues Glu22–Leu23 and Glu82. Residues Arg114, Lys155, Ser160–Gln165, Glu195–Ile198, and Glu203 each bind ATP. The ATP-grasp domain occupies Arg119–Leu308. Mg(2+)-binding residues include Glu267 and Glu279. N(1)-(5-phospho-beta-D-ribosyl)glycinamide contacts are provided by residues Asp286, Lys356, and Arg363–Arg364.

Belongs to the PurK/PurT family. As to quaternary structure, homodimer.

It carries out the reaction N(1)-(5-phospho-beta-D-ribosyl)glycinamide + formate + ATP = N(2)-formyl-N(1)-(5-phospho-beta-D-ribosyl)glycinamide + ADP + phosphate + H(+). It participates in purine metabolism; IMP biosynthesis via de novo pathway; N(2)-formyl-N(1)-(5-phospho-D-ribosyl)glycinamide from N(1)-(5-phospho-D-ribosyl)glycinamide (formate route): step 1/1. Its function is as follows. Involved in the de novo purine biosynthesis. Catalyzes the transfer of formate to 5-phospho-ribosyl-glycinamide (GAR), producing 5-phospho-ribosyl-N-formylglycinamide (FGAR). Formate is provided by PurU via hydrolysis of 10-formyl-tetrahydrofolate. The sequence is that of Formate-dependent phosphoribosylglycinamide formyltransferase from Haemophilus ducreyi (strain 35000HP / ATCC 700724).